The primary structure comprises 215 residues: MKLVEKTTTTEQDNGEDFCRTIIEVSEVNRNVFQAPGGEADPFRVVSGEELHLIPPLNFSMVDNGIFRSGFPDSANFSFLQTLGLRSIIYLCPEPYPESNLQFLKSNGIRLFQFGIEGNKEPFVNIPDHKIRMALKVLLDEKNHPVLIHCKRGKHRTGCLVGCLRKLQKWCLTSIFDEYQRFAAAKARVSDQRFMEIFDVSSFSHIPMSFSCSIR.

The Tyrosine-protein phosphatase domain occupies Asn-58–Ser-209. Positions Phe-114–Ile-126 are WPD loop important for active site topology. Residues Asn-125, Ile-126, His-129, and Lys-130 each coordinate 1D-myo-inositol hexakisphosphate. Cys-150 acts as the Phosphocysteine intermediate in catalysis.

The protein belongs to the protein-tyrosine phosphatase family. Atypical dual-specificity phosphatase Siw14-like subfamily. As to quaternary structure, homodimer and homohexamer; behaves as a monomer in solution. As to expression, highly expressed in siliques and at lower levels in roots, leaves and flowers.

The catalysed reaction is 5-diphospho-1D-myo-inositol 1,2,3,4,6-pentakisphosphate + H2O = 1D-myo-inositol hexakisphosphate + phosphate + H(+). The enzyme catalyses 1,5-bis(diphospho)-1D-myo-inositol 2,3,4,6-tetrakisphosphate + H2O = 1-diphospho-1D-myo-inositol 2,3,4,5,6-pentakisphosphate + phosphate + 2 H(+). It catalyses the reaction 3,5-bis(diphospho)-1D-myo-inositol 1,2,4,6-tetrakisphosphate + H2O = 3-diphospho-1D-myo-inositol 1,2,4,5,6-pentakisphosphate + phosphate + 2 H(+). It carries out the reaction 6-diphospho-1D-myo-inositol pentakisphosphate + H2O = 1D-myo-inositol hexakisphosphate + phosphate + H(+). The catalysed reaction is 5-diphospho-1D-myo-inositol 1,3,4,6-tetrakisphosphate + H2O = 1D-myo-inositol 1,3,4,5,6-pentakisphosphate + phosphate + H(+). Inhibited by manganese, calcium and zinc ions but not magnesium ions. Cleaves the beta-phosphate at the 5-position of soluble inositol pyrophosphates. Has highest activity on 5-diphosphoinositol 1,2,3,4,6-pentakisphosphate (5-InsP(7)), 1,5-bis-diphosphoinositol 2,3,4,6-tetrakisphosphate (1,5-InsP(8)) and 3,5-InsP(8), but has weak activity against 1-diphosphoinositol 2,3,4,5,6-pentakisphosphate (1-InsP(7)). Dephosphorylates the phosphoinositides PI(3,4,5)P3, PI(3,5)P2, but not PI(3)P, PI(3,4)P2 or PI(4,5)P2. Possesses phosphotyrosine phosphatase activity in vitro, and can hydrolyze para-nitrophenyl phosphate, O-methylfluorescein phosphate, polyphosphate and ATP. This Arabidopsis thaliana (Mouse-ear cress) protein is Inositol diphosphatase DSP1.